Reading from the N-terminus, the 118-residue chain is HTH-type transcriptional regulator SarT (118 aa).

Positions 55-78 form a DNA-binding region, H-T-H motif; it reads MRDIISYIGIDQSRIVKSVKDLSK.

Belongs to the SarA family.

Its subcellular location is the cytoplasm. Transcriptional regulator acting as an intermediary between major regulators sarA and agr and virulence genes. Represses alpha-hemolysin (hla) gene expression. Down-regulates agr RNAIII expression by repressing sarU, a positive activator of agr expression. Up-regulates sarS, which induces the expression of the cell wall-associated protein A (spa). The polypeptide is HTH-type transcriptional regulator SarT (sarT) (Staphylococcus aureus (strain NCTC 8325 / PS 47)).